The following is a 398-amino-acid chain: S-adenosylmethionine synthase (398 aa).

136 to 141 (GTGSSD) provides a ligand contact to ATP.

The protein belongs to the AdoMet synthase 2 family. Mg(2+) serves as cofactor.

It carries out the reaction L-methionine + ATP + H2O = S-adenosyl-L-methionine + phosphate + diphosphate. It participates in amino-acid biosynthesis; S-adenosyl-L-methionine biosynthesis; S-adenosyl-L-methionine from L-methionine: step 1/1. Catalyzes the formation of S-adenosylmethionine from methionine and ATP. The protein is S-adenosylmethionine synthase of Methanosarcina mazei (strain ATCC BAA-159 / DSM 3647 / Goe1 / Go1 / JCM 11833 / OCM 88) (Methanosarcina frisia).